The chain runs to 426 residues: MKHLTEMVRQHKAGKTNGIYAVCSAHPLVLEAAIRYASANQTPLLIEATSNQVDQFGGYTGMTPADFRGFVCQLADSLNFPQDALILGGDHLGPNRWQNLPAAQAMANADDLIKSYVAAGFKKIHLDCSMSCQDDPIPLTDDIVAERAARLAKVAEETCREHFGEADLEYVIGTEVPVPGGAHETLSELAVTTPDAARATLEAHRHAFEKQGLNAIWPRIIALVVQPGVEFDHTNVIDYQPAKASALSQMVENYETLIFEAHSTDYQTPQSLRQLVIDHFAILKVGPALTFALREALFSLAAIEEELVPAKACSGLRQVQEDVMLDRPEYWQSHYHGDGNARRLARGYSYSDRVRYYWPDSQIDDAFAHLVRNLADSPIPLPLISQYLPLQYVKVRSGELQPTPRELIINHIQDILAQYHTACEGQ.

Belongs to the GatZ/KbaZ family. KbaZ subfamily. As to quaternary structure, forms a complex with KbaY.

Its pathway is carbohydrate metabolism; D-tagatose 6-phosphate degradation; D-glyceraldehyde 3-phosphate and glycerone phosphate from D-tagatose 6-phosphate: step 2/2. Its function is as follows. Component of the tagatose-1,6-bisphosphate aldolase KbaYZ that is required for full activity and stability of the Y subunit. Could have a chaperone-like function for the proper and stable folding of KbaY. When expressed alone, KbaZ does not show any aldolase activity. The sequence is that of D-tagatose-1,6-bisphosphate aldolase subunit KbaZ from Escherichia coli (strain 55989 / EAEC).